We begin with the raw amino-acid sequence, 316 residues long: Lipoyl synthase (316 aa).

Positions 60, 65, 71, 86, 90, 93, and 297 each coordinate [4Fe-4S] cluster. The region spanning 72–286 is the Radical SAM core domain; that stretch reads WEDREATFLI…KDEADEVGFT (215 aa).

This sequence belongs to the radical SAM superfamily. Lipoyl synthase family. [4Fe-4S] cluster serves as cofactor.

It localises to the cytoplasm. The enzyme catalyses [[Fe-S] cluster scaffold protein carrying a second [4Fe-4S](2+) cluster] + N(6)-octanoyl-L-lysyl-[protein] + 2 oxidized [2Fe-2S]-[ferredoxin] + 2 S-adenosyl-L-methionine + 4 H(+) = [[Fe-S] cluster scaffold protein] + N(6)-[(R)-dihydrolipoyl]-L-lysyl-[protein] + 4 Fe(3+) + 2 hydrogen sulfide + 2 5'-deoxyadenosine + 2 L-methionine + 2 reduced [2Fe-2S]-[ferredoxin]. It functions in the pathway protein modification; protein lipoylation via endogenous pathway; protein N(6)-(lipoyl)lysine from octanoyl-[acyl-carrier-protein]: step 2/2. Functionally, catalyzes the radical-mediated insertion of two sulfur atoms into the C-6 and C-8 positions of the octanoyl moiety bound to the lipoyl domains of lipoate-dependent enzymes, thereby converting the octanoylated domains into lipoylated derivatives. This Nocardioides sp. (strain ATCC BAA-499 / JS614) protein is Lipoyl synthase.